The sequence spans 371 residues: Thyroid transcription factor 1 (371 aa).

The segment at residues Arg161–Ala220 is a DNA-binding region (homeobox). Disordered stretches follow at residues Gln219 to Ala294 and Ser308 to Gly342. Residues Ser233–Gly243 are compositionally biased toward gly residues. 2 stretches are compositionally biased toward low complexity: residues Cys244 to Gln253 and Ala272 to Ala294.

It belongs to the NK-2 homeobox family. Phosphorylated on serine residues. In terms of tissue distribution, thyroid, lung and CNS.

The protein resides in the nucleus. Its function is as follows. Transcription factor that binds and activates the promoter of thyroid specific genes such as thyroglobulin, thyroperoxidase, and thyrotropin receptor. Crucial in the maintenance of the thyroid differentiation phenotype. May play a role in lung development and surfactant homeostasis. The chain is Thyroid transcription factor 1 (TITF1) from Canis lupus familiaris (Dog).